A 361-amino-acid polypeptide reads, in one-letter code: Chorismate synthase (361 aa).

Residues Arg48 and Arg54 each contribute to the NADP(+) site. Residues 125–127, 238–239, Gly278, 293–297, and Arg319 contribute to the FMN site; these read RSS, NA, and KPTSS.

This sequence belongs to the chorismate synthase family. In terms of assembly, homotetramer. Requires FMNH2 as cofactor.

The enzyme catalyses 5-O-(1-carboxyvinyl)-3-phosphoshikimate = chorismate + phosphate. Its pathway is metabolic intermediate biosynthesis; chorismate biosynthesis; chorismate from D-erythrose 4-phosphate and phosphoenolpyruvate: step 7/7. Functionally, catalyzes the anti-1,4-elimination of the C-3 phosphate and the C-6 proR hydrogen from 5-enolpyruvylshikimate-3-phosphate (EPSP) to yield chorismate, which is the branch point compound that serves as the starting substrate for the three terminal pathways of aromatic amino acid biosynthesis. This reaction introduces a second double bond into the aromatic ring system. This Escherichia coli (strain SE11) protein is Chorismate synthase.